The following is a 493-amino-acid chain: Probable malate:quinone oxidoreductase (493 aa).

It belongs to the MQO family. Requires FAD as cofactor.

The enzyme catalyses (S)-malate + a quinone = a quinol + oxaloacetate. It functions in the pathway carbohydrate metabolism; tricarboxylic acid cycle; oxaloacetate from (S)-malate (quinone route): step 1/1. In Mycobacterium marinum (strain ATCC BAA-535 / M), this protein is Probable malate:quinone oxidoreductase.